A 628-amino-acid chain; its full sequence is Kelch-like protein diablo (628 aa).

Residues 1 to 56 (MGDLPGSTGGGSGPAAAGNASGNASSAGNTGLGVAGTTGVDRPPSPARLSHTSEKH) are disordered. Over residues 14 to 29 (PAAAGNASGNASSAGN) the composition is skewed to low complexity. A BTB domain is found at 74 to 141 (CDVVLNVGGR…CYTAHIIVEE (68 aa)). The region spanning 176 to 278 (CLGIRAFADT…SPKFLVGTVG (103 aa)) is the BACK domain. Kelch repeat units lie at residues 325–371 (VLFA…VLND), 373–419 (LYAV…VLDG), 420–466 (FLYA…VLGG), 468–513 (LYAI…VFNN), 515–560 (IYAV…VVNG), and 561–607 (QLYA…VMRA).

The protein operates within protein modification; protein ubiquitination. Its function is as follows. Probable substrate-specific adapter of an E3 ubiquitin-protein ligase complex which mediates the ubiquitination and subsequent proteasomal degradation of target proteins. May have a role in synapse differentiation and growth. The sequence is that of Kelch-like protein diablo from Drosophila pseudoobscura pseudoobscura (Fruit fly).